The chain runs to 105 residues: Circadian clock oscillator protein KaiB (105 aa).

It belongs to the KaiB family. May undergo a major conformational rearrangment; in the free state forms homooligomers. When bound to KaiC switches to a monomeric thioredoxin-fold (KaiB(fs)). The active oscillator complex is probably KaiC(6):KaiB(6).

Its function is as follows. Component of the KaiBC clock protein complex, which constitutes the main circadian regulator in cyanobacteria; it may modify the ATPase activity of KaiC. Functionally, may be a metamorphic protein which reversibly switches between an inactive tetrameric fold and a rare, thioredoxin-like monomeric fold (KaiB(fs)). KaiB(fs) binds phospho-KaiC, and perhaps clock output effectors. This chain is Circadian clock oscillator protein KaiB, found in Prochlorococcus marinus (strain MIT 9312).